The sequence spans 438 residues: Na(+)/H(+) antiporter NhaA (438 aa).

A run of 11 helical transmembrane segments spans residues 23-43 (FGGIFLFLNAVLAMVVANSFL), 62-82 (FFIGFSLHNWIDDVLMALFFL), 104-124 (SFPVIAALGGMIAPGLIYFFL), 133-153 (GFGIPMATDIAFALGVIMLLG), 162-182 (VFLITLAVADDLGAIIVIALF), 185-205 (TNLKFAWLLGALGVVLLLALL), 221-241 (VLLWFCVHQSGIHATIAAVVL), 302-322 (FLAPISGYFIMPLFAFANAGV), 337-357 (FGVILGLCLGKPLGIFLITFI), 372-392 (WWHILGAGLLAGIGFTMSMFI), and 410-430 (IAILLGSLISGIIGALYLFAL).

The protein belongs to the NhaA Na(+)/H(+) (TC 2.A.33) antiporter family.

The protein resides in the cell inner membrane. The enzyme catalyses Na(+)(in) + 2 H(+)(out) = Na(+)(out) + 2 H(+)(in). Functionally, na(+)/H(+) antiporter that extrudes sodium in exchange for external protons. This chain is Na(+)/H(+) antiporter NhaA, found in Helicobacter pylori (strain P12).